We begin with the raw amino-acid sequence, 292 residues long: Nucleotide-binding protein SACE_2139 (292 aa).

15 to 22 (GLSGAGRS) contributes to the ATP binding site. A GTP-binding site is contributed by 66-69 (DVRS).

The protein belongs to the RapZ-like family.

Functionally, displays ATPase and GTPase activities. The polypeptide is Nucleotide-binding protein SACE_2139 (Saccharopolyspora erythraea (strain ATCC 11635 / DSM 40517 / JCM 4748 / NBRC 13426 / NCIMB 8594 / NRRL 2338)).